Here is a 99-residue protein sequence, read N- to C-terminus: Leydig cell tumor 10 kDa protein homolog (99 aa).

The tract at residues 1 to 37 (MAQGQRKFQARKPAKSKTAATASEKNRGPRKGGRVIA) is disordered. Over residues 28–37 (GPRKGGRVIA) the composition is skewed to basic residues.

The protein belongs to the UPF0390 family.

May have a potential role in hypercalcemia of malignancy. This chain is Leydig cell tumor 10 kDa protein homolog, found in Pongo abelii (Sumatran orangutan).